Consider the following 134-residue polypeptide: ATP synthase epsilon chain (134 aa).

It belongs to the ATPase epsilon chain family. In terms of assembly, F-type ATPases have 2 components, CF(1) - the catalytic core - and CF(0) - the membrane proton channel. CF(1) has five subunits: alpha(3), beta(3), gamma(1), delta(1), epsilon(1). CF(0) has three main subunits: a, b and c.

Its subcellular location is the cellular thylakoid membrane. Its function is as follows. Produces ATP from ADP in the presence of a proton gradient across the membrane. The chain is ATP synthase epsilon chain from Prochlorococcus marinus (strain AS9601).